A 494-amino-acid chain; its full sequence is V-type proton ATPase subunit B (494 aa).

Arginine 384 serves as a coordination point for ATP.

The protein belongs to the ATPase alpha/beta chains family. As to quaternary structure, V-ATPase is a heteromultimeric enzyme made up of two complexes: the ATP-hydrolytic V1 complex and the proton translocation V0 complex. The V1 complex consists of three catalytic AB heterodimers that form a heterohexamer, three peripheral stalks each consisting of EG heterodimers, one central rotor including subunits D and F, and the regulatory subunits C and H. The proton translocation complex V0 consists of the proton transport subunit a, a ring of proteolipid subunits c9c'', rotary subunit d, subunits e and f, and the accessory subunits VhaAC45 and ATP6AP2.

Non-catalytic subunit of the V1 complex of vacuolar(H+)-ATPase (V-ATPase), a multisubunit enzyme composed of a peripheral complex (V1) that hydrolyzes ATP and a membrane integral complex (V0) that translocates protons. V-ATPase is responsible for acidifying and maintaining the pH of intracellular compartments and in some cell types, is targeted to the plasma membrane, where it is responsible for acidifying the extracellular environment. Essential for the proper assembly and activity of V-ATPase. The chain is V-type proton ATPase subunit B (VHA55) from Heliothis virescens (Tobacco budworm moth).